We begin with the raw amino-acid sequence, 376 residues long: Methionine import ATP-binding protein MetN 2 (376 aa).

The segment at 1–25 is disordered; the sequence is MTATAQRQRPIDTTGAGQRAQQAEL. One can recognise an ABC transporter domain in the interval 34–273; the sequence is VRFINLGKTY…PQHEVSKTLL (240 aa). 70–77 provides a ligand contact to ATP; sequence GRSGAGKS.

It belongs to the ABC transporter superfamily. Methionine importer (TC 3.A.1.24) family. As to quaternary structure, the complex is composed of two ATP-binding proteins (MetN), two transmembrane proteins (MetI) and a solute-binding protein (MetQ).

The protein resides in the cell inner membrane. It catalyses the reaction L-methionine(out) + ATP + H2O = L-methionine(in) + ADP + phosphate + H(+). The enzyme catalyses D-methionine(out) + ATP + H2O = D-methionine(in) + ADP + phosphate + H(+). Part of the ABC transporter complex MetNIQ involved in methionine import. Responsible for energy coupling to the transport system. The sequence is that of Methionine import ATP-binding protein MetN 2 from Pseudomonas syringae pv. syringae (strain B728a).